The sequence spans 289 residues: ATP synthase gamma chain (289 aa).

It belongs to the ATPase gamma chain family. In terms of assembly, F-type ATPases have 2 components, CF(1) - the catalytic core - and CF(0) - the membrane proton channel. CF(1) has five subunits: alpha(3), beta(3), gamma(1), delta(1), epsilon(1). CF(0) has three main subunits: a, b and c.

The protein resides in the cell inner membrane. In terms of biological role, produces ATP from ADP in the presence of a proton gradient across the membrane. The gamma chain is believed to be important in regulating ATPase activity and the flow of protons through the CF(0) complex. The chain is ATP synthase gamma chain from Halorhodospira halophila (strain DSM 244 / SL1) (Ectothiorhodospira halophila (strain DSM 244 / SL1)).